A 235-amino-acid polypeptide reads, in one-letter code: MSKNSKAYRAAAEKVDRSNLYTPLQAAKLAKETSSTKQDATVEVAIRLGVDPRKADQMVRGTVNLPHGTGKTARVAVFAVGEKADAAVAAGADIVGSDDLIEKIQGGFLDFDAAIATPDQMAKVGRIARVLGPRGLMPNPKTGTVTPDVAKAVADIKGGKINFRVDKQANLHFVIGKASFEENKLAENYGAAIDEVLRLKPSASKGRYLKKITVSTTTGPGIPVDPSVTRNFTEA.

It belongs to the universal ribosomal protein uL1 family. In terms of assembly, part of the 50S ribosomal subunit.

Functionally, binds directly to 23S rRNA. The L1 stalk is quite mobile in the ribosome, and is involved in E site tRNA release. Protein L1 is also a translational repressor protein, it controls the translation of the L11 operon by binding to its mRNA. The sequence is that of Large ribosomal subunit protein uL1 from Mycobacterium marinum (strain ATCC BAA-535 / M).